The following is a 166-amino-acid chain: PTS system glucose-specific EIIA component (166 aa).

Positions 34–138 (DPVFAQKMMG…SVISPIIITN (105 aa)) constitute a PTS EIIA type-1 domain. Histidine 71 and histidine 86 together coordinate Zn(2+). Histidine 86 (tele-phosphohistidine intermediate; for EIIA activity) is an active-site residue. Phosphohistidine; by HPr is present on histidine 86.

In terms of assembly, heterodimer with glycerol kinase (glpk). Requires Zn(2+) as cofactor.

The protein resides in the cytoplasm. The phosphoenolpyruvate-dependent sugar phosphotransferase system (sugar PTS), a major carbohydrate active transport system, catalyzes the phosphorylation of incoming sugar substrates concomitantly with their translocation across the cell membrane. The enzyme II complex composed of PtsG and Crr is involved in glucose transport. This Staphylococcus aureus (strain MRSA252) protein is PTS system glucose-specific EIIA component (crr).